Reading from the N-terminus, the 588-residue chain is Proteasome-associated ATPase (588 aa).

Positions 1–10 (MAAHDDDMNR) are enriched in basic and acidic residues. A disordered region spans residues 1–23 (MAAHDDDMNRGIRPGRGSDDPSG). Positions 47–94 (RILEERIVELQTNLAGVSAQNERLANTLREARDQIVALKEEVDRLAQP) form a coiled coil. 276-281 (GCGKTL) provides a ligand contact to ATP. The segment at 587–588 (YL) is docks into pockets in the proteasome alpha-ring.

The protein belongs to the AAA ATPase family. Homohexamer. Assembles into a hexameric ring structure that caps the 20S proteasome core. Strongly interacts with the prokaryotic ubiquitin-like protein Pup through a hydrophobic interface; the interacting region of ARC lies in its N-terminal coiled-coil domain. There is one Pup binding site per ARC hexamer ring. Upon ATP-binding, the C-terminus of ARC interacts with the alpha-rings of the proteasome core, possibly by binding to the intersubunit pockets.

Its pathway is protein degradation; proteasomal Pup-dependent pathway. Its function is as follows. ATPase which is responsible for recognizing, binding, unfolding and translocation of pupylated proteins into the bacterial 20S proteasome core particle. May be essential for opening the gate of the 20S proteasome via an interaction with its C-terminus, thereby allowing substrate entry and access to the site of proteolysis. Thus, the C-termini of the proteasomal ATPase may function like a 'key in a lock' to induce gate opening and therefore regulate proteolysis. This chain is Proteasome-associated ATPase, found in Streptomyces scabiei (strain 87.22).